The following is a 249-amino-acid chain: Phosphate import ATP-binding protein PstB 3 (249 aa).

The region spanning 4–244 (LVINNLDLYY…PQDERTENYI (241 aa)) is the ABC transporter domain. 36 to 43 (GPSGCGKS) contributes to the ATP binding site.

The protein belongs to the ABC transporter superfamily. Phosphate importer (TC 3.A.1.7) family. In terms of assembly, the complex is composed of two ATP-binding proteins (PstB), two transmembrane proteins (PstC and PstA) and a solute-binding protein (PstS).

The protein resides in the cell membrane. The catalysed reaction is phosphate(out) + ATP + H2O = ADP + 2 phosphate(in) + H(+). In terms of biological role, part of the ABC transporter complex PstSACB involved in phosphate import. Responsible for energy coupling to the transport system. This chain is Phosphate import ATP-binding protein PstB 3, found in Streptococcus agalactiae serotype Ia (strain ATCC 27591 / A909 / CDC SS700).